The sequence spans 635 residues: Threonine--tRNA ligase (635 aa).

A TGS domain is found at 1 to 61 (MINISLSDGS…ENNCKLRILT (61 aa)). The tract at residues 242 to 533 (DHRKLGRELD…LIEEYAGCFP (292 aa)) is catalytic. Cys-333, His-384, and His-510 together coordinate Zn(2+).

Belongs to the class-II aminoacyl-tRNA synthetase family. Homodimer. It depends on Zn(2+) as a cofactor.

Its subcellular location is the cytoplasm. It carries out the reaction tRNA(Thr) + L-threonine + ATP = L-threonyl-tRNA(Thr) + AMP + diphosphate + H(+). In terms of biological role, catalyzes the attachment of threonine to tRNA(Thr) in a two-step reaction: L-threonine is first activated by ATP to form Thr-AMP and then transferred to the acceptor end of tRNA(Thr). Also edits incorrectly charged L-seryl-tRNA(Thr). In Rickettsia canadensis (strain McKiel), this protein is Threonine--tRNA ligase.